Reading from the N-terminus, the 727-residue chain is C-terminal-binding protein 1 (727 aa).

The THAP-type zinc-finger motif lies at 5 to 60; the sequence is CGFPNCKFRSRYRGLEDNRHFYRIPKRPLILRQRWLTAIGRTEETVVSQLRICSAH. The interval 64-158 is disordered; that stretch reads GEKKEGDIPV…HPPVLPDPQQ (95 aa). Positions 77 to 94 are enriched in basic and acidic residues; sequence TVDKQIKIELPPKESKNS. Residues Y251, 331–336, D355, 388–394, 415–417, D441, and 467–470 contribute to the NAD(+) site; these read LGCGRV, CNLGDET, TSH, and HSAW. Residues 587-613 are compositionally biased toward low complexity; sequence ANAQRGSPANRSSRSSPSPHTNKSSVS. Disordered regions lie at residues 587 to 629 and 652 to 681; these read ANAQ…SPAA and APNG…GDEN.

Belongs to the D-isomer specific 2-hydroxyacid dehydrogenase family. As to quaternary structure, homodimer.

Binds DNA and represses gene expression. Plays a role in regulation of life span, possibly by regulating transcription of genes important for lipid metabolism. This is C-terminal-binding protein 1 from Caenorhabditis elegans.